Consider the following 151-residue polypeptide: MERALLILKPDAVQRGLIGAIISRFEQRGLKFQGLKLMQVDEALARRHYAEHEGKSFFEGLVKYITSAPVVVAVVAGKPGTVELVRTMVGATNPAKAAPGTIRGDFGVDIGRNLIHASDSPESGERETAIFFQPHELIGDWNRTLDGWIYE.

6 residues coordinate ATP: Lys9, Phe57, Arg86, Thr92, Arg103, and Asn113. Catalysis depends on His116, which acts as the Pros-phosphohistidine intermediate.

Belongs to the NDK family. In terms of assembly, homotetramer. It depends on Mg(2+) as a cofactor.

It is found in the cytoplasm. The enzyme catalyses a 2'-deoxyribonucleoside 5'-diphosphate + ATP = a 2'-deoxyribonucleoside 5'-triphosphate + ADP. It catalyses the reaction a ribonucleoside 5'-diphosphate + ATP = a ribonucleoside 5'-triphosphate + ADP. In terms of biological role, major role in the synthesis of nucleoside triphosphates other than ATP. The ATP gamma phosphate is transferred to the NDP beta phosphate via a ping-pong mechanism, using a phosphorylated active-site intermediate. In Chloroflexus aggregans (strain MD-66 / DSM 9485), this protein is Nucleoside diphosphate kinase.